The sequence spans 420 residues: Glutamate dehydrogenase (420 aa).

The active site involves K105. 220-226 (GYGNAGY) is a binding site for NAD(+).

This sequence belongs to the Glu/Leu/Phe/Val dehydrogenases family. In terms of assembly, homohexamer.

It is found in the cytoplasm. It carries out the reaction L-glutamate + NAD(+) + H2O = 2-oxoglutarate + NH4(+) + NADH + H(+). The catalysed reaction is L-glutamate + NADP(+) + H2O = 2-oxoglutarate + NH4(+) + NADPH + H(+). The sequence is that of Glutamate dehydrogenase (gdhA) from Pyrococcus endeavori.